A 92-amino-acid polypeptide reads, in one-letter code: Large ribosomal subunit protein bL27 (92 aa).

Residues 1 to 9 constitute a propeptide that is removed on maturation; that stretch reads MLKLNLQFF. Positions 14–34 are disordered; sequence GVGSTKNGRDSQSKRLGAKRA.

The protein belongs to the bacterial ribosomal protein bL27 family. In terms of processing, the N-terminus is cleaved by ribosomal processing cysteine protease Prp.

In Exiguobacterium sibiricum (strain DSM 17290 / CCUG 55495 / CIP 109462 / JCM 13490 / 255-15), this protein is Large ribosomal subunit protein bL27.